A 127-amino-acid polypeptide reads, in one-letter code: Large ribosomal subunit protein bL19 (127 aa).

The protein belongs to the bacterial ribosomal protein bL19 family.

This protein is located at the 30S-50S ribosomal subunit interface and may play a role in the structure and function of the aminoacyl-tRNA binding site. This Ruegeria pomeroyi (strain ATCC 700808 / DSM 15171 / DSS-3) (Silicibacter pomeroyi) protein is Large ribosomal subunit protein bL19.